Reading from the N-terminus, the 100-residue chain is Large ribosomal subunit protein uL23 (100 aa).

The protein belongs to the universal ribosomal protein uL23 family. As to quaternary structure, part of the 50S ribosomal subunit. Contacts protein L29, and trigger factor when it is bound to the ribosome.

Its function is as follows. One of the early assembly proteins it binds 23S rRNA. One of the proteins that surrounds the polypeptide exit tunnel on the outside of the ribosome. Forms the main docking site for trigger factor binding to the ribosome. This is Large ribosomal subunit protein uL23 from Prochlorococcus marinus subsp. pastoris (strain CCMP1986 / NIES-2087 / MED4).